Here is a 77-residue protein sequence, read N- to C-terminus: Protein RALF-like 17 (77 aa).

A signal peptide spans 1 to 29; that stretch reads MAASREFIICCFLTLLLCNFFMRVESGAA. A disulfide bridge connects residues Cys37 and Cys51.

Belongs to the plant rapid alkalinization factor (RALF) family.

The protein localises to the secreted. Functionally, cell signaling peptide that may regulate plant stress, growth, and development. Mediates a rapid alkalinization of extracellular space by mediating a transient increase in the cytoplasmic Ca(2+) concentration leading to a calcium-dependent signaling events through a cell surface receptor and a concomitant activation of some intracellular mitogen-activated protein kinases. This chain is Protein RALF-like 17 (RALFL17), found in Arabidopsis thaliana (Mouse-ear cress).